We begin with the raw amino-acid sequence, 353 residues long: Photosystem II D2 protein (353 aa).

Thr2 is modified (N-acetylthreonine). The residue at position 2 (Thr2) is a Phosphothreonine. A helical transmembrane segment spans residues 41–61 (CAYFAVGGWFTGTTFVTSWYT). Position 118 (His118) interacts with chlorophyll a. The chain crosses the membrane as a helical span at residues 125–141 (GFMLRQFELARSVQLRP). Pheophytin a is bound by residues Gln130 and Asn143. Residues 153 to 166 (VFVSVFLIYPLGQS) traverse the membrane as a helical segment. His198 provides a ligand contact to chlorophyll a. The chain crosses the membrane as a helical span at residues 208 to 228 (AALLCAIHGATVENTLFEDGD). Positions 215 and 262 each coordinate a plastoquinone. His215 is a binding site for Fe cation. A Fe cation-binding site is contributed by His269. The helical transmembrane segment at 279 to 295 (GLWMSALGVVGLALNLR) threads the bilayer.

The protein belongs to the reaction center PufL/M/PsbA/D family. PSII is composed of 1 copy each of membrane proteins PsbA, PsbB, PsbC, PsbD, PsbE, PsbF, PsbH, PsbI, PsbJ, PsbK, PsbL, PsbM, PsbT, PsbX, PsbY, PsbZ, Psb30/Ycf12, at least 3 peripheral proteins of the oxygen-evolving complex and a large number of cofactors. It forms dimeric complexes. The cofactor is The D1/D2 heterodimer binds P680, chlorophylls that are the primary electron donor of PSII, and subsequent electron acceptors. It shares a non-heme iron and each subunit binds pheophytin, quinone, additional chlorophylls, carotenoids and lipids. There is also a Cl(-1) ion associated with D1 and D2, which is required for oxygen evolution. The PSII complex binds additional chlorophylls, carotenoids and specific lipids..

The protein localises to the plastid. It localises to the chloroplast thylakoid membrane. The enzyme catalyses 2 a plastoquinone + 4 hnu + 2 H2O = 2 a plastoquinol + O2. Functionally, photosystem II (PSII) is a light-driven water:plastoquinone oxidoreductase that uses light energy to abstract electrons from H(2)O, generating O(2) and a proton gradient subsequently used for ATP formation. It consists of a core antenna complex that captures photons, and an electron transfer chain that converts photonic excitation into a charge separation. The D1/D2 (PsbA/PsbD) reaction center heterodimer binds P680, the primary electron donor of PSII as well as several subsequent electron acceptors. D2 is needed for assembly of a stable PSII complex. The protein is Photosystem II D2 protein of Atropa belladonna (Belladonna).